The following is a 1074-amino-acid chain: Topoisomerase 1-associated factor 1 (1074 aa).

Disordered regions lie at residues 572-595 (NTHK…QRKI) and 936-1074 (EEPP…DRET). Basic residues-rich tracts occupy residues 948–962 (LLRR…RRRS) and 978–991 (GHQH…KRAK). Over residues 1014-1031 (EATRRFFENEERLRREMD) the composition is skewed to basic and acidic residues. A compositionally biased stretch (basic residues) spans 1046 to 1055 (VKRKRGKKNG).

Belongs to the timeless family.

It is found in the nucleus. In terms of biological role, involved in chromosome segregation during meiosis and DNA damage repair. This is Topoisomerase 1-associated factor 1 (TOF1) from Cryptococcus neoformans var. neoformans serotype D (strain JEC21 / ATCC MYA-565) (Filobasidiella neoformans).